The chain runs to 354 residues: DNA polymerase IV (354 aa).

Positions 8 to 189 (IIHVDMDCFY…LPLEKIPGVG (182 aa)) constitute a UmuC domain. Residues aspartate 12 and aspartate 107 each coordinate Mg(2+). The active site involves glutamate 108.

Belongs to the DNA polymerase type-Y family. Monomer. Mg(2+) is required as a cofactor.

It is found in the cytoplasm. It carries out the reaction DNA(n) + a 2'-deoxyribonucleoside 5'-triphosphate = DNA(n+1) + diphosphate. Functionally, poorly processive, error-prone DNA polymerase involved in untargeted mutagenesis. Copies undamaged DNA at stalled replication forks, which arise in vivo from mismatched or misaligned primer ends. These misaligned primers can be extended by PolIV. Exhibits no 3'-5' exonuclease (proofreading) activity. May be involved in translesional synthesis, in conjunction with the beta clamp from PolIII. The chain is DNA polymerase IV from Vibrio parahaemolyticus serotype O3:K6 (strain RIMD 2210633).